The primary structure comprises 639 residues: ATP-dependent zinc metalloprotease FtsH (639 aa).

Topologically, residues M1 to K20 are cytoplasmic. A helical transmembrane segment spans residues N21 to I41. Residues R42–L120 lie on the Periplasmic side of the membrane. A helical membrane pass occupies residues I121–F141. Residues R142 to G639 lie on the Cytoplasmic side of the membrane. ATP is bound at residue G212–T219. Residue H434 coordinates Zn(2+). E435 is an active-site residue. Residues H438 and D510 each coordinate Zn(2+).

In the central section; belongs to the AAA ATPase family. It in the C-terminal section; belongs to the peptidase M41 family. As to quaternary structure, homohexamer. Zn(2+) serves as cofactor.

It localises to the cell inner membrane. Functionally, acts as a processive, ATP-dependent zinc metallopeptidase for both cytoplasmic and membrane proteins. Plays a role in the quality control of integral membrane proteins. The protein is ATP-dependent zinc metalloprotease FtsH of Borreliella burgdorferi (strain ZS7) (Borrelia burgdorferi).